Consider the following 24-residue polypeptide: Hemocyanin subunit 4e (24 aa).

It belongs to the tyrosinase family. Hemocyanin subfamily. In terms of tissue distribution, hemolymph.

It localises to the secreted. The protein localises to the extracellular space. In terms of biological role, hemocyanins are copper-containing oxygen carriers occurring freely dissolved in the hemolymph of many mollusks and arthropods. The chain is Hemocyanin subunit 4e from Maja squinado (Mediterranean spider crab).